Consider the following 435-residue polypeptide: Serine--tRNA ligase (435 aa).

233–235 contacts L-serine; sequence TAE. 264-266 lines the ATP pocket; the sequence is RAE. Glu287 is an L-serine binding site. 351–354 contacts ATP; it reads EISS. Ser386 is a binding site for L-serine.

It belongs to the class-II aminoacyl-tRNA synthetase family. Type-1 seryl-tRNA synthetase subfamily. In terms of assembly, homodimer. The tRNA molecule binds across the dimer.

It localises to the cytoplasm. It catalyses the reaction tRNA(Ser) + L-serine + ATP = L-seryl-tRNA(Ser) + AMP + diphosphate + H(+). The catalysed reaction is tRNA(Sec) + L-serine + ATP = L-seryl-tRNA(Sec) + AMP + diphosphate + H(+). It participates in aminoacyl-tRNA biosynthesis; selenocysteinyl-tRNA(Sec) biosynthesis; L-seryl-tRNA(Sec) from L-serine and tRNA(Sec): step 1/1. Catalyzes the attachment of serine to tRNA(Ser). Is also able to aminoacylate tRNA(Sec) with serine, to form the misacylated tRNA L-seryl-tRNA(Sec), which will be further converted into selenocysteinyl-tRNA(Sec). This is Serine--tRNA ligase from Anaeromyxobacter dehalogenans (strain 2CP-C).